The sequence spans 341 residues: Calcium-binding protein 39 (341 aa).

This sequence belongs to the Mo25 family. Component of a trimeric complex composed of STK11/LKB1, STRAD (STRADA or STRADB) and CAB39/MO25 (CAB39/MO25alpha or CAB39L/MO25beta): the complex tethers STK11/LKB1 in the cytoplasm and stimulates its catalytic activity.

It localises to the cytoplasm. Functionally, component of a complex that binds and activates STK11/LKB1. In the complex, required to stabilize the interaction between CAB39/MO25 (CAB39/MO25alpha or CAB39L/MO25beta) and STK11/LKB1. The polypeptide is Calcium-binding protein 39 (CAB39) (Bos taurus (Bovine)).